Reading from the N-terminus, the 334-residue chain is Formamidase (334 aa).

Positions 14–260 constitute a CN hydrolase domain; it reads FLVAAIQFPV…WEIVTGEIYP (247 aa). The active-site Proton acceptor is the E60. Residue K133 is the Proton donor of the active site. C166 acts as the Nucleophile in catalysis.

This sequence belongs to the carbon-nitrogen hydrolase superfamily. Aliphatic amidase family.

It catalyses the reaction formamide + H2O = formate + NH4(+). Is an aliphatic amidase with a restricted substrate specificity, as it only hydrolyzes formamide. The polypeptide is Formamidase (Helicobacter pylori (strain G27)).